The following is a 188-amino-acid chain: Epididymal-specific lipocalin-5 (188 aa).

The first 19 residues, 1-19, serve as a signal peptide directing secretion; it reads MENIMPFALLGLCVGLAAG. Cys-82 and Cys-176 are joined by a disulfide.

Belongs to the calycin superfamily. Lipocalin family. There are two similar, immunologically cross-reacting forms of this protein, designated B and C, which probably result from different processing of the amino end. In terms of processing, the N-terminus of form C is probably blocked. As to expression, synthesized exclusively in the proximal part (caput epididymidis) of the epididymis. It makes up a substantial part of the total protein in the epididymal luminal fluid and binds to the sperm membrane.

The protein localises to the secreted. Associates with spermatozoa in the epididymal fluid but does not bind tightly to them. Binds both all-trans and 9-cis retinoic acid. May act as a retinoid carrier protein which is required for epididymal function and/or sperm maturation. This chain is Epididymal-specific lipocalin-5 (Lcn5), found in Rattus norvegicus (Rat).